The chain runs to 686 residues: Alpha-amylase 1 (686 aa).

E125 (nucleophile) is an active-site residue. The active-site Proton donor is the D216.

It belongs to the glycosyl hydrolase 57 family.

The protein resides in the cytoplasm. The catalysed reaction is Endohydrolysis of (1-&gt;4)-alpha-D-glucosidic linkages in polysaccharides containing three or more (1-&gt;4)-alpha-linked D-glucose units.. Functionally, this amylase is a highly liquefying-type: oligomers appeared at the beginning of incubation, followed by a graded decrease in the amounts of maltotriose, maltose and glucose in prolonged incubation. This Dictyoglomus thermophilum (strain ATCC 35947 / DSM 3960 / H-6-12) protein is Alpha-amylase 1 (amyA).